The sequence spans 192 residues: NADH-ubiquinone oxidoreductase subunit 9 (192 aa).

The protein belongs to the complex I 30 kDa subunit family. In terms of assembly, complex I is composed of about 30 different subunits.

It is found in the mitochondrion inner membrane. It carries out the reaction a ubiquinone + NADH + 5 H(+)(in) = a ubiquinol + NAD(+) + 4 H(+)(out). Functionally, core subunit of the mitochondrial membrane respiratory chain NADH dehydrogenase (Complex I) that is believed to belong to the minimal assembly required for catalysis. Complex I functions in the transfer of electrons from NADH to the respiratory chain. The immediate electron acceptor for the enzyme is believed to be ubiquinone. In Prototheca wickerhamii, this protein is NADH-ubiquinone oxidoreductase subunit 9 (NAD9).